Here is a 124-residue protein sequence, read N- to C-terminus: Fluoride-specific ion channel FluC (124 aa).

Transmembrane regions (helical) follow at residues Phe6 to Val26, Phe34 to Ala54, Ala69 to Leu89, and Phe101 to Leu121. The Na(+) site is built by Gly76 and Thr79.

It belongs to the fluoride channel Fluc/FEX (TC 1.A.43) family.

It is found in the cell inner membrane. It catalyses the reaction fluoride(in) = fluoride(out). With respect to regulation, na(+) is not transported, but it plays an essential structural role and its presence is essential for fluoride channel function. Functionally, fluoride-specific ion channel. Important for reducing fluoride concentration in the cell, thus reducing its toxicity. The polypeptide is Fluoride-specific ion channel FluC (Stutzerimonas stutzeri (strain A1501) (Pseudomonas stutzeri)).